We begin with the raw amino-acid sequence, 296 residues long: GTP cyclohydrolase FolE2 (296 aa).

Belongs to the GTP cyclohydrolase IV family.

The catalysed reaction is GTP + H2O = 7,8-dihydroneopterin 3'-triphosphate + formate + H(+). It functions in the pathway cofactor biosynthesis; 7,8-dihydroneopterin triphosphate biosynthesis; 7,8-dihydroneopterin triphosphate from GTP: step 1/1. In terms of biological role, converts GTP to 7,8-dihydroneopterin triphosphate. This chain is GTP cyclohydrolase FolE2, found in Ectopseudomonas mendocina (strain ymp) (Pseudomonas mendocina).